We begin with the raw amino-acid sequence, 454 residues long: uncharacterized protein (454 aa).

Cys73, Cys79, Cys82, and Cys154 together coordinate [4Fe-4S] cluster. S-adenosyl-L-methionine is bound by residues Gln279, Phe307, Asp328, and Asp381. Cys408 acts as the Nucleophile in catalysis.

The protein belongs to the class I-like SAM-binding methyltransferase superfamily. RNA M5U methyltransferase family.

This is an uncharacterized protein from Leptospira interrogans serogroup Icterohaemorrhagiae serovar Lai (strain 56601).